An 814-amino-acid chain; its full sequence is Cadherin-15 (814 aa).

A signal peptide spans 1–21; that stretch reads MDAAFLLVLGLLAQSLCLSLG. The propeptide occupies 22–60; the sequence is VPGWRRPTTLYPWRRAPALSRVRRAWVIPPISVSENHKR. Cadherin domains follow at residues 61–152, 153–260, 261–375, 376–481, and 482–590; these read LPYP…RPAF, LQEA…APEF, TRDE…PPVF, QENP…DHAP, and VLAP…VCLP. At 61–606 the chain is on the extracellular side; that stretch reads LPYPLVQIKS…AGGTGLSLGA (546 aa). Asparagine 227 is a glycosylation site (N-linked (GlcNAc...) asparagine). Residues asparagine 531, asparagine 538, and asparagine 576 are each glycosylated (N-linked (GlcNAc...) asparagine). A helical membrane pass occupies residues 607-626; it reads LVIVLASALLLLVLVLLVAL. Over 627-814 the chain is Cytoplasmic; sequence RARFWKQSRG…LLPRHRGRTA (188 aa). Disordered stretches follow at residues 636-663 and 676-703; these read GKGL…GEED and TALS…PPRV.

Expressed in the brain and cerebellum.

It is found in the cell membrane. Cadherins are calcium-dependent cell adhesion proteins. They preferentially interact with themselves in a homophilic manner in connecting cells; cadherins may thus contribute to the sorting of heterogeneous cell types. M-cadherin is part of the myogenic program and may provide a trigger for terminal muscle differentiation. This is Cadherin-15 (CDH15) from Homo sapiens (Human).